The primary structure comprises 48 residues: Phosphatidylserine decarboxylase proenzyme (48 aa).

It belongs to the phosphatidylserine decarboxylase family. Type 1 subfamily. Pyruvate is required as a cofactor.

The catalysed reaction is a 1,2-diacyl-sn-glycero-3-phospho-L-serine + H(+) = a 1,2-diacyl-sn-glycero-3-phosphoethanolamine + CO2. It participates in phospholipid metabolism; phosphatidylethanolamine biosynthesis; phosphatidylethanolamine from CDP-diacylglycerol: step 2/2. The chain is Phosphatidylserine decarboxylase proenzyme (psd) from Azotobacter vinelandii.